The sequence spans 158 residues: Low molecular weight phosphotyrosine protein phosphatase (158 aa).

Alanine 2 carries the N-acetylalanine modification. The active-site Nucleophile is the cysteine 13. Residue arginine 19 is part of the active site. Aspartate 130 serves as the catalytic Proton donor. A phosphotyrosine mark is found at tyrosine 132 and tyrosine 133.

This sequence belongs to the low molecular weight phosphotyrosine protein phosphatase family.

It is found in the cytoplasm. The catalysed reaction is O-phospho-L-tyrosyl-[protein] + H2O = L-tyrosyl-[protein] + phosphate. It catalyses the reaction a phosphate monoester + H2O = an alcohol + phosphate. Acts on tyrosine phosphorylated proteins, low-MW aryl phosphates and natural and synthetic acyl phosphates. This is Low molecular weight phosphotyrosine protein phosphatase (ACP1) from Gallus gallus (Chicken).